The following is a 357-amino-acid chain: Alanine racemase (357 aa).

The active-site Proton acceptor; specific for D-alanine is lysine 35. Lysine 35 bears the N6-(pyridoxal phosphate)lysine mark. A substrate-binding site is contributed by arginine 130. Tyrosine 255 acts as the Proton acceptor; specific for L-alanine in catalysis. Methionine 303 is a binding site for substrate.

It belongs to the alanine racemase family. Pyridoxal 5'-phosphate is required as a cofactor.

It catalyses the reaction L-alanine = D-alanine. Its pathway is amino-acid biosynthesis; D-alanine biosynthesis; D-alanine from L-alanine: step 1/1. In terms of biological role, catalyzes the interconversion of L-alanine and D-alanine. May also act on other amino acids. The chain is Alanine racemase (alr) from Nitrosospira multiformis (strain ATCC 25196 / NCIMB 11849 / C 71).